We begin with the raw amino-acid sequence, 327 residues long: Ribose 1,5-bisphosphate isomerase (327 aa).

Substrate is bound by residues 25–28 (RGAA) and arginine 68. Cysteine 133 (proton acceptor) is an active-site residue. The active-site Proton donor is aspartate 202. Residues 212–213 (NK) and lysine 238 each bind substrate.

The protein belongs to the eIF-2B alpha/beta/delta subunits family. R15P isomerase subfamily.

The enzyme catalyses alpha-D-ribose 1,5-bisphosphate = D-ribulose 1,5-bisphosphate. In terms of biological role, isomerase involved in the non-carboxylating pentose bisphosphate pathway, a nucleoside degradation pathway present in some halophilic archaea. Catalyzes the isomerization of ribose 1,5-bisphosphate (R15P) to ribulose 1,5-bisphosphate (RuBP). This chain is Ribose 1,5-bisphosphate isomerase, found in Haloterrigena turkmenica (strain ATCC 51198 / DSM 5511 / JCM 9101 / NCIMB 13204 / VKM B-1734 / 4k) (Halococcus turkmenicus).